The primary structure comprises 261 residues: uncharacterized protein (261 aa).

The N-terminal stretch at 1-20 (MKIQVMLIIIFVGIFTICLA) is a signal peptide. N-linked (GlcNAc...) asparagine; by host glycans are attached at residues Asn-22 and Asn-27.

Its subcellular location is the secreted. This is an uncharacterized protein from Acanthamoeba polyphaga (Amoeba).